The chain runs to 193 residues: MEKKQSILSPIIRITFTFLVLCGLVYPLIVTGIAQAVMKDNADGSLIYNDKNEVIGSKLIGQNFTDPRYFQGRVSSIEYKAEASGSNNYAPSNPDLAKRVEKSIADWKEKNPAVPVTEIPIDLVTNSGSGLDPDISPKAASVQVDRISKLTNIPKEKLNQLIKDQTEGAALGLFGETRVNVLKLNLALQKLMK.

Residues 14–34 (ITFTFLVLCGLVYPLIVTGIA) form a helical membrane-spanning segment.

This sequence belongs to the KdpC family. As to quaternary structure, the system is composed of three essential subunits: KdpA, KdpB and KdpC.

It localises to the cell membrane. In terms of biological role, part of the high-affinity ATP-driven potassium transport (or Kdp) system, which catalyzes the hydrolysis of ATP coupled with the electrogenic transport of potassium into the cytoplasm. This subunit acts as a catalytic chaperone that increases the ATP-binding affinity of the ATP-hydrolyzing subunit KdpB by the formation of a transient KdpB/KdpC/ATP ternary complex. The chain is Potassium-transporting ATPase KdpC subunit from Bacillus cereus (strain B4264).